A 129-amino-acid polypeptide reads, in one-letter code: Large ribosomal subunit protein uL22 (129 aa).

This sequence belongs to the universal ribosomal protein uL22 family. Part of the 50S ribosomal subunit.

Its function is as follows. This protein binds specifically to 23S rRNA; its binding is stimulated by other ribosomal proteins, e.g. L4, L17, and L20. It is important during the early stages of 50S assembly. It makes multiple contacts with different domains of the 23S rRNA in the assembled 50S subunit and ribosome. Functionally, the globular domain of the protein is located near the polypeptide exit tunnel on the outside of the subunit, while an extended beta-hairpin is found that lines the wall of the exit tunnel in the center of the 70S ribosome. This is Large ribosomal subunit protein uL22 from Bartonella henselae (strain ATCC 49882 / DSM 28221 / CCUG 30454 / Houston 1) (Rochalimaea henselae).